A 249-amino-acid chain; its full sequence is Triosephosphate isomerase (249 aa).

2 residues coordinate substrate: Asn10 and Lys12. The active-site Electrophile is the His94. The active-site Proton acceptor is Glu166.

This sequence belongs to the triosephosphate isomerase family. In terms of assembly, homodimer.

The catalysed reaction is D-glyceraldehyde 3-phosphate = dihydroxyacetone phosphate. It functions in the pathway carbohydrate biosynthesis; gluconeogenesis. It participates in carbohydrate degradation; glycolysis; D-glyceraldehyde 3-phosphate from glycerone phosphate: step 1/1. The polypeptide is Triosephosphate isomerase (tpiA) (Emericella nidulans (strain FGSC A4 / ATCC 38163 / CBS 112.46 / NRRL 194 / M139) (Aspergillus nidulans)).